The primary structure comprises 1412 residues: MKALLDLFKQVQQEEIFDAIKIGLASPDKIRSWSFGEVKKPETINYRTFKPERDGLFCAKIFGPIKDYECLCGKYKRLKHRGVICEKCGVEVTLAKVRRERMGHIELASPVAHIWFLKSLPSRLGMVLDMTLRDIERVLYFEAYVVIDPGMTPLKARQIMTEEDYYNKVEEYGDEFRAEMGAEGVRELLRSINIDEQVETLRTELKNTGSEAKIKKYAKRLKVLEAFQRSGIKPDWMILEVLPVLPPELRPLVPLDGGRFATSDLNDLYRRVINRNNRLKRLLELKAPEIIVRNEKRMLQEAVDSLLDNGRRGKAMTGANKRPLKSLADMIKGKGGRFRQNLLGKRVDYSGRSVIVVGPTLKLHQCGLPKLMALELFKPFIFNKLEVMGVATTIKAAKKEVENQTPVVWDILEEVIREHPVMLNRAPTLHRLGIQAFEPVLIEGKAIQLHPLVCAAFNADFDGDQMAVHVPLSLEAQMEARTLMLASNNVLFPANGDPSIVPSQDIVLGLYYATREAINGKGEGLSFTGVSEVIRAYENKEVELASRVNVRITEMVRNEDTSEGAPQFVPKISLYATTVGRAILSEILPPGLPFSVLNKPLKKKEISRLINTAFRKCGLRATVVFADQLMQSGFRLATRAGISICVDDMLVPTQKEQIVGDAAKKVKEYDRQYMSGLVTAQERYNNVVDIWSATSEAVGKAMMEQLSTEPVVDRDGNETRQESFNSIYMMADSGARGSAVQIRQLAGMRGLMAKPDGSIIETPITANFREGLNVLQYFISTHGARKGLADTALKTANSGYLTRRLVDVTQDLVVVEDDCGTSNGVAMKALVEGGEVVEALRDRILGRVAASDVVNPETQETLYEAGTLLDETAVEDIERLGIDEVRVRTALTCETRYGLCASCYGRDLGRGSLVNVGEAVGVIAAQSIGEPGTQLTMRTFHIGGAASRAAVASSVEAKSNGTVRFTATMRYVTNAKGEQIVISRSGEAMITDDIGRERERHKVPYGATLLQLDGAQIKAGTQLATWDPLTRPIITEYGGTVKFENVEEGVTVAKQIDDVTGLSTLVVIDVKRRGSQASKSVRPQVKLLDANGEEVKIPGTEHAVQIGFQVGALITVKDGQQVQVGEVLARIPTEAQKTRDITGGLPRVAELFEARSPKDAGILAEVTGTTSFGKDTKGKQRLVITDLEGNQHEFLIAKEKQVLVHDAQVVNKGEMIVDGPADPHDILRLQGIEALSRYIVDEVQDVYRLQGVKINDKHIEVIVRQMLRRVQIVDNGDTRFIPGEQVERSDMLDENDRMIAEGKRPATYENILLGITKASLSTDSFISAASFQETTRVLTEAAIMGKRDDLRGLKENVIVGRLIPAGTGLAFHKARKAKEQSDRERFDQIAAEEAFEFGTPSTPAEEPQHPAE.

Cysteine 70, cysteine 72, cysteine 85, and cysteine 88 together coordinate Zn(2+). Mg(2+) is bound by residues aspartate 460, aspartate 462, and aspartate 464. 4 residues coordinate Zn(2+): cysteine 819, cysteine 893, cysteine 900, and cysteine 903. A disordered region spans residues 1392–1412 (EEAFEFGTPSTPAEEPQHPAE).

Belongs to the RNA polymerase beta' chain family. In terms of assembly, the RNAP catalytic core consists of 2 alpha, 1 beta, 1 beta' and 1 omega subunit. When a sigma factor is associated with the core the holoenzyme is formed, which can initiate transcription. It depends on Mg(2+) as a cofactor. Zn(2+) is required as a cofactor.

It catalyses the reaction RNA(n) + a ribonucleoside 5'-triphosphate = RNA(n+1) + diphosphate. Its function is as follows. DNA-dependent RNA polymerase catalyzes the transcription of DNA into RNA using the four ribonucleoside triphosphates as substrates. The polypeptide is DNA-directed RNA polymerase subunit beta' (Burkholderia thailandensis (strain ATCC 700388 / DSM 13276 / CCUG 48851 / CIP 106301 / E264)).